A 263-amino-acid polypeptide reads, in one-letter code: HLA class II histocompatibility antigen, DM beta chain (263 aa).

The signal sequence occupies residues 1-18; sequence MITFLPLLLGLSLGCTGA. The segment at 19-112 is beta-1; that stretch reads GGFVAHVEST…PFWGSLTNRT (94 aa). At 19 to 218 the chain is on the lumenal side; that stretch reads GGFVAHVEST…PGLSPMQTLK (200 aa). 2 disulfide bridges follow: cysteine 29/cysteine 97 and cysteine 43/cysteine 53. An N-linked (GlcNAc...) asparagine glycan is attached at asparagine 110. The tract at residues 113-207 is beta-2; the sequence is RPPSVQVAKT…GAPEPILRDW (95 aa). An Ig-like C1-type domain is found at 114-208; it reads PPSVQVAKTT…APEPILRDWT (95 aa). An intrachain disulfide couples cysteine 135 to cysteine 192. Residues 208-218 form a connecting peptide region; the sequence is TPGLSPMQTLK. The helical transmembrane segment at 219-239 threads the bilayer; sequence VSVSAVTLGLGLIIFSLGVIS. At 240 to 263 the chain is on the cytoplasmic side; that stretch reads WRRAGHSSYTPLPGSNYSEGWHIS. Residues 248–251 carry the YXXZ motif motif; sequence YTPL.

Belongs to the MHC class II family. Heterodimer of an alpha chain (DMA) and a beta chain (DMB). Interacts with MHCII; this interaction mediates rapid selection of high-affinity peptides in a pH-dependent manner, with an optimum at pH 5.5.

It localises to the late endosome membrane. The protein resides in the lysosome membrane. Plays a critical role in catalyzing the release of class II-associated invariant chain peptide (CLIP) from newly synthesized MHC class II molecules and freeing the peptide binding site for acquisition of antigenic peptides. In B-cells, the interaction between HLA-DM and MHC class II molecules is regulated by HLA-DO. This is HLA class II histocompatibility antigen, DM beta chain (HLA-DMB) from Homo sapiens (Human).